We begin with the raw amino-acid sequence, 493 residues long: 3-octaprenyl-4-hydroxybenzoate carboxy-lyase (493 aa).

Asparagine 172 serves as a coordination point for Mn(2+). Prenylated FMN contacts are provided by residues 175-177 (IYR), 189-191 (RWL), and 194-195 (RG). Glutamate 238 contacts Mn(2+). Residue aspartate 287 is the Proton donor of the active site.

It belongs to the UbiD family. In terms of assembly, homohexamer. Prenylated FMN serves as cofactor. Mn(2+) is required as a cofactor.

The protein resides in the cell membrane. The enzyme catalyses a 4-hydroxy-3-(all-trans-polyprenyl)benzoate + H(+) = a 2-(all-trans-polyprenyl)phenol + CO2. The protein operates within cofactor biosynthesis; ubiquinone biosynthesis. Functionally, catalyzes the decarboxylation of 3-octaprenyl-4-hydroxy benzoate to 2-octaprenylphenol, an intermediate step in ubiquinone biosynthesis. This chain is 3-octaprenyl-4-hydroxybenzoate carboxy-lyase, found in Shewanella piezotolerans (strain WP3 / JCM 13877).